The sequence spans 207 residues: Probable mediator of RNA polymerase II transcription subunit 19b (207 aa).

A disordered region spans residues 99-207 (DTAPVELPPA…SSKLDEMGAM (109 aa)). Residues 127–152 (DRKHRKHKDKKEKDREHKKHKHKHKD) show a composition bias toward basic residues. A compositionally biased stretch (basic and acidic residues) spans 153 to 167 (RIKDKDKDKDRDKKK). The span at 168 to 179 (EKSGHHDKKRKN) shows a compositional bias: basic residues.

Belongs to the plant Mediator complex subunit 19 family. In terms of assembly, component of the Mediator complex.

Its subcellular location is the nucleus. Its function is as follows. Component of the Mediator complex, a coactivator involved in the regulated transcription of nearly all RNA polymerase II-dependent genes. Mediator functions as a bridge to convey information from gene-specific regulatory proteins to the basal RNA polymerase II transcription machinery. The Mediator complex, having a compact conformation in its free form, is recruited to promoters by direct interactions with regulatory proteins and serves for the assembly of a functional preinitiation complex with RNA polymerase II and the general transcription factors. In Arabidopsis thaliana (Mouse-ear cress), this protein is Probable mediator of RNA polymerase II transcription subunit 19b (MED19B).